The chain runs to 264 residues: 3-methyl-2-oxobutanoate hydroxymethyltransferase (264 aa).

Mg(2+)-binding residues include aspartate 45 and aspartate 84. 3-methyl-2-oxobutanoate contacts are provided by residues 45–46 (DS), aspartate 84, and lysine 113. A Mg(2+)-binding site is contributed by glutamate 115. Residue glutamate 182 is the Proton acceptor of the active site.

Belongs to the PanB family. Homodecamer; pentamer of dimers. It depends on Mg(2+) as a cofactor.

It is found in the cytoplasm. The catalysed reaction is 3-methyl-2-oxobutanoate + (6R)-5,10-methylene-5,6,7,8-tetrahydrofolate + H2O = 2-dehydropantoate + (6S)-5,6,7,8-tetrahydrofolate. The protein operates within cofactor biosynthesis; (R)-pantothenate biosynthesis; (R)-pantoate from 3-methyl-2-oxobutanoate: step 1/2. Its function is as follows. Catalyzes the reversible reaction in which hydroxymethyl group from 5,10-methylenetetrahydrofolate is transferred onto alpha-ketoisovalerate to form ketopantoate. In Helicobacter hepaticus (strain ATCC 51449 / 3B1), this protein is 3-methyl-2-oxobutanoate hydroxymethyltransferase.